We begin with the raw amino-acid sequence, 522 residues long: Glutamate--cysteine ligase (522 aa).

The protein belongs to the glutamate--cysteine ligase type 1 family. Type 1 subfamily.

The enzyme catalyses L-cysteine + L-glutamate + ATP = gamma-L-glutamyl-L-cysteine + ADP + phosphate + H(+). Its pathway is sulfur metabolism; glutathione biosynthesis; glutathione from L-cysteine and L-glutamate: step 1/2. This Vibrio parahaemolyticus serotype O3:K6 (strain RIMD 2210633) protein is Glutamate--cysteine ligase.